We begin with the raw amino-acid sequence, 311 residues long: tRNA-cytidine(32) 2-sulfurtransferase (311 aa).

The PP-loop motif signature appears at 47-52; that stretch reads SGGKDS. Cys-122, Cys-125, and Cys-213 together coordinate [4Fe-4S] cluster.

The protein belongs to the TtcA family. As to quaternary structure, homodimer. Mg(2+) serves as cofactor. [4Fe-4S] cluster is required as a cofactor.

Its subcellular location is the cytoplasm. The enzyme catalyses cytidine(32) in tRNA + S-sulfanyl-L-cysteinyl-[cysteine desulfurase] + AH2 + ATP = 2-thiocytidine(32) in tRNA + L-cysteinyl-[cysteine desulfurase] + A + AMP + diphosphate + H(+). It functions in the pathway tRNA modification. In terms of biological role, catalyzes the ATP-dependent 2-thiolation of cytidine in position 32 of tRNA, to form 2-thiocytidine (s(2)C32). The sulfur atoms are provided by the cysteine/cysteine desulfurase (IscS) system. The chain is tRNA-cytidine(32) 2-sulfurtransferase from Salmonella typhi.